A 398-amino-acid chain; its full sequence is 1-deoxy-D-xylulose 5-phosphate reductoisomerase (398 aa).

NADPH is bound by residues T10, G11, S12, I13, G36, N38, and N124. K125 contributes to the 1-deoxy-D-xylulose 5-phosphate binding site. An NADPH-binding site is contributed by E126. D150 lines the Mn(2+) pocket. 1-deoxy-D-xylulose 5-phosphate contacts are provided by S151, E152, S176, and H199. E152 serves as a coordination point for Mn(2+). Residue G205 coordinates NADPH. Residues S212, N217, K218, and E221 each contribute to the 1-deoxy-D-xylulose 5-phosphate site. E221 provides a ligand contact to Mn(2+).

The protein belongs to the DXR family. Requires Mg(2+) as cofactor. Mn(2+) serves as cofactor.

The catalysed reaction is 2-C-methyl-D-erythritol 4-phosphate + NADP(+) = 1-deoxy-D-xylulose 5-phosphate + NADPH + H(+). Its pathway is isoprenoid biosynthesis; isopentenyl diphosphate biosynthesis via DXP pathway; isopentenyl diphosphate from 1-deoxy-D-xylulose 5-phosphate: step 1/6. Catalyzes the NADPH-dependent rearrangement and reduction of 1-deoxy-D-xylulose-5-phosphate (DXP) to 2-C-methyl-D-erythritol 4-phosphate (MEP). This is 1-deoxy-D-xylulose 5-phosphate reductoisomerase from Nostoc punctiforme (strain ATCC 29133 / PCC 73102).